Here is a 604-residue protein sequence, read N- to C-terminus: Elongation factor 4 (604 aa).

The region spanning 7 to 189 (SRLRNFCIIA…AVVDRIPPPA (183 aa)) is the tr-type G domain. Residues 19-24 (DHGKST) and 136-139 (NKID) contribute to the GTP site.

It belongs to the TRAFAC class translation factor GTPase superfamily. Classic translation factor GTPase family. LepA subfamily.

It localises to the cell inner membrane. The catalysed reaction is GTP + H2O = GDP + phosphate + H(+). Required for accurate and efficient protein synthesis under certain stress conditions. May act as a fidelity factor of the translation reaction, by catalyzing a one-codon backward translocation of tRNAs on improperly translocated ribosomes. Back-translocation proceeds from a post-translocation (POST) complex to a pre-translocation (PRE) complex, thus giving elongation factor G a second chance to translocate the tRNAs correctly. Binds to ribosomes in a GTP-dependent manner. The protein is Elongation factor 4 of Prochlorococcus marinus (strain MIT 9303).